A 968-amino-acid chain; its full sequence is RNA polymerase-associated protein RapA (968 aa).

Residues 164–334 (DVGRRHAPRV…FARLRLLDPN (171 aa)) enclose the Helicase ATP-binding domain. An ATP-binding site is contributed by 177 to 184 (DEVGLGKT). The short motif at 280–283 (DEAH) is the DEAH box element. The region spanning 490 to 662 (RVEWLMGYLT…YLASPDQTEG (173 aa)) is the Helicase C-terminal domain.

This sequence belongs to the SNF2/RAD54 helicase family. RapA subfamily. As to quaternary structure, interacts with the RNAP. Has a higher affinity for the core RNAP than for the holoenzyme. Its ATPase activity is stimulated by binding to RNAP.

Functionally, transcription regulator that activates transcription by stimulating RNA polymerase (RNAP) recycling in case of stress conditions such as supercoiled DNA or high salt concentrations. Probably acts by releasing the RNAP, when it is trapped or immobilized on tightly supercoiled DNA. Does not activate transcription on linear DNA. Probably not involved in DNA repair. The polypeptide is RNA polymerase-associated protein RapA (Shigella boydii serotype 18 (strain CDC 3083-94 / BS512)).